Consider the following 72-residue polypeptide: Large ribosomal subunit protein uL29 (72 aa).

It belongs to the universal ribosomal protein uL29 family.

The chain is Large ribosomal subunit protein uL29 from Caldicellulosiruptor saccharolyticus (strain ATCC 43494 / DSM 8903 / Tp8T 6331).